The sequence spans 247 residues: Pyridoxine 5'-phosphate synthase (247 aa).

Asn-9 contacts 3-amino-2-oxopropyl phosphate. 11-12 (DH) contacts 1-deoxy-D-xylulose 5-phosphate. Arg-20 is a 3-amino-2-oxopropyl phosphate binding site. His-45 acts as the Proton acceptor in catalysis. Arg-47 and His-52 together coordinate 1-deoxy-D-xylulose 5-phosphate. Glu-72 (proton acceptor) is an active-site residue. A 1-deoxy-D-xylulose 5-phosphate-binding site is contributed by Thr-102. His-193 (proton donor) is an active-site residue. 3-amino-2-oxopropyl phosphate is bound by residues Gly-194 and 215 to 216 (GH).

Belongs to the PNP synthase family. In terms of assembly, homooctamer; tetramer of dimers.

The protein resides in the cytoplasm. It catalyses the reaction 3-amino-2-oxopropyl phosphate + 1-deoxy-D-xylulose 5-phosphate = pyridoxine 5'-phosphate + phosphate + 2 H2O + H(+). Its pathway is cofactor biosynthesis; pyridoxine 5'-phosphate biosynthesis; pyridoxine 5'-phosphate from D-erythrose 4-phosphate: step 5/5. Its function is as follows. Catalyzes the complicated ring closure reaction between the two acyclic compounds 1-deoxy-D-xylulose-5-phosphate (DXP) and 3-amino-2-oxopropyl phosphate (1-amino-acetone-3-phosphate or AAP) to form pyridoxine 5'-phosphate (PNP) and inorganic phosphate. In Blochmanniella floridana, this protein is Pyridoxine 5'-phosphate synthase.